Consider the following 202-residue polypeptide: Dephospho-CoA kinase (202 aa).

The DPCK domain maps to 4-200 (VVGVTGGIGS…QRYLAATVAQ (197 aa)). Residue 12-17 (GSGKSA) coordinates ATP.

This sequence belongs to the CoaE family.

Its subcellular location is the cytoplasm. The enzyme catalyses 3'-dephospho-CoA + ATP = ADP + CoA + H(+). Its pathway is cofactor biosynthesis; coenzyme A biosynthesis; CoA from (R)-pantothenate: step 5/5. Its function is as follows. Catalyzes the phosphorylation of the 3'-hydroxyl group of dephosphocoenzyme A to form coenzyme A. The sequence is that of Dephospho-CoA kinase from Idiomarina loihiensis (strain ATCC BAA-735 / DSM 15497 / L2-TR).